The chain runs to 242 residues: MMSSSKETAKSLIQTKSRSSIRNMFDEVAPTYDFLNHLLSLGIDNYWRVVAAKKARKQLEGEREPKILDVATGTGDLAASMAKIPGAKVTGYDLSPEMLAIARKKYPNIEFLEGFAEKMPFDDRSFHVVSAGFGVRNFEDLAQGMKEFHRVLKPGGCAYIIEPMIPRNAVMKKLYLIYFKNVLPKIAGMFSKSTFAYDYLPNSVEQFPQAEAFTKILKNAGFKKAEYFPMTFETSILYVAMK.

S-adenosyl-L-methionine-binding residues include Thr74 and Asp93.

The protein belongs to the class I-like SAM-binding methyltransferase superfamily. MenG/UbiE family.

It catalyses the reaction a 2-demethylmenaquinol + S-adenosyl-L-methionine = a menaquinol + S-adenosyl-L-homocysteine + H(+). Its pathway is quinol/quinone metabolism; menaquinone biosynthesis; menaquinol from 1,4-dihydroxy-2-naphthoate: step 2/2. Its function is as follows. Methyltransferase required for the conversion of demethylmenaquinol (DMKH2) to menaquinol (MKH2). The protein is Demethylmenaquinone methyltransferase of Chlorobaculum tepidum (strain ATCC 49652 / DSM 12025 / NBRC 103806 / TLS) (Chlorobium tepidum).